Reading from the N-terminus, the 935-residue chain is Lon protease homolog 2, peroxisomal (935 aa).

One can recognise a Lon N-terminal domain in the interval leucine 12–glycine 296. Residue glycine 452 to threonine 459 participates in ATP binding. Residues glutamine 692–glycine 922 form the Lon proteolytic domain. Active-site residues include serine 789 and lysine 832. Residues alanine 933–isoleucine 935 carry the Microbody targeting signal motif.

The protein belongs to the peptidase S16 family.

Its subcellular location is the peroxisome matrix. The enzyme catalyses Hydrolysis of proteins in presence of ATP.. Functionally, ATP-dependent serine protease that mediates the selective degradation of misfolded and unassembled polypeptides in the peroxisomal matrix. Necessary for type 2 peroxisome targeting signal (PTS2)-containing protein processing and facilitates peroxisome matrix protein import. In Pichia angusta (Yeast), this protein is Lon protease homolog 2, peroxisomal (PLN).